We begin with the raw amino-acid sequence, 237 residues long: tRNA-splicing endonuclease subunit Sen2-1 (237 aa).

Residues tyrosine 148, histidine 156, and lysine 190 contribute to the active site.

Belongs to the tRNA-intron endonuclease family. TRNA splicing endonuclease is a heterotetramer composed of SEN2, SEN15, SEN34/LENG5 and SEN54.

It is found in the nucleus. It catalyses the reaction pretRNA = a 3'-half-tRNA molecule with a 5'-OH end + a 5'-half-tRNA molecule with a 2',3'-cyclic phosphate end + an intron with a 2',3'-cyclic phosphate and a 5'-hydroxyl terminus.. Functionally, constitutes one of the two catalytic subunit of the tRNA-splicing endonuclease complex, a complex responsible for identification and cleavage of the splice sites in pre-tRNA. It cleaves pre-tRNA at the 5'- and 3'-splice sites to release the intron. The products are an intron and two tRNA half-molecules bearing 2',3'-cyclic phosphate and 5'-OH termini. There are no conserved sequences at the splice sites, but the intron is invariably located at the same site in the gene, placing the splice sites an invariant distance from the constant structural features of the tRNA body. Probably carries the active site for 5'-splice site cleavage. This chain is tRNA-splicing endonuclease subunit Sen2-1 (SEN1), found in Arabidopsis thaliana (Mouse-ear cress).